Here is a 185-residue protein sequence, read N- to C-terminus: uncharacterized protein (185 aa).

This is an uncharacterized protein from Methanocaldococcus jannaschii (strain ATCC 43067 / DSM 2661 / JAL-1 / JCM 10045 / NBRC 100440) (Methanococcus jannaschii).